Consider the following 191-residue polypeptide: Peptidyl-tRNA hydrolase (191 aa).

Tyr-14 lines the tRNA pocket. The Proton acceptor role is filled by His-19. Tyr-64, Asn-66, and Asn-112 together coordinate tRNA.

It belongs to the PTH family. Monomer.

The protein localises to the cytoplasm. It catalyses the reaction an N-acyl-L-alpha-aminoacyl-tRNA + H2O = an N-acyl-L-amino acid + a tRNA + H(+). Hydrolyzes ribosome-free peptidyl-tRNAs (with 1 or more amino acids incorporated), which drop off the ribosome during protein synthesis, or as a result of ribosome stalling. Its function is as follows. Catalyzes the release of premature peptidyl moieties from peptidyl-tRNA molecules trapped in stalled 50S ribosomal subunits, and thus maintains levels of free tRNAs and 50S ribosomes. The polypeptide is Peptidyl-tRNA hydrolase (Syntrophotalea carbinolica (strain DSM 2380 / NBRC 103641 / GraBd1) (Pelobacter carbinolicus)).